The sequence spans 560 residues: Nibrin homolog (560 aa).

In terms of domain architecture, FHA spans 25–87 (YKVGRKDCDV…YGTFFNKVQG (63 aa)). The region spanning 115-190 (TFRLSFVPIV…KQIVLGDWFK (76 aa)) is the BRCT domain. A Nuclear localization signal motif is present at residues 511 to 518 (YKRGTVID).

It belongs to the Nibrin family. As to quaternary structure, component of the MRN complex composed of two heterodimers RAD50 and MRE11 associated with a single NBS1.

It localises to the nucleus. It is found in the chromosome. Component of the MRN complex, which plays a central role in double-strand break (DSB) repair, DNA recombination, maintenance of telomere integrity and meiosis. The MRN complex is involved in the repair of DNA double-strand breaks (DSBs) via homologous recombination (HR), an error-free mechanism which primarily occurs during S and G2 phases. The complex (1) mediates the end resection of damaged DNA, which generates proper single-stranded DNA, a key initial steps in HR, and is (2) required for the recruitment of other repair factors and efficient activation of ATM and ATR upon DNA damage. The MRN complex possesses single-strand endonuclease activity and double-strand-specific 3'-5' exonuclease activity, which are provided by MRE11, to initiate end resection, which is required for single-strand invasion and recombination. Within the MRN complex, NBS1 acts as a protein-protein adapter, which specifically recognizes and binds phosphorylated proteins, promoting their recruitment to DNA damage sites. Recruits MRE11 and RAD50 components of the MRN complex to DSBs in response to DNA damage. The protein is Nibrin homolog of Oryza sativa subsp. indica (Rice).